A 260-amino-acid chain; its full sequence is Type III pantothenate kinase (260 aa).

An ATP-binding site is contributed by 6 to 13; sequence DAGNTNIV. Position 108–111 (108–111) interacts with substrate; it reads GADR. The Proton acceptor role is filled by D110. Residue D130 participates in K(+) binding. T133 lines the ATP pocket. T187 is a binding site for substrate.

This sequence belongs to the type III pantothenate kinase family. As to quaternary structure, homodimer. Requires NH4(+) as cofactor. The cofactor is K(+).

The protein resides in the cytoplasm. It carries out the reaction (R)-pantothenate + ATP = (R)-4'-phosphopantothenate + ADP + H(+). It participates in cofactor biosynthesis; coenzyme A biosynthesis; CoA from (R)-pantothenate: step 1/5. In terms of biological role, catalyzes the phosphorylation of pantothenate (Pan), the first step in CoA biosynthesis. The protein is Type III pantothenate kinase of Rhizorhabdus wittichii (strain DSM 6014 / CCUG 31198 / JCM 15750 / NBRC 105917 / EY 4224 / RW1) (Sphingomonas wittichii).